Reading from the N-terminus, the 174-residue chain is Repair DNA polymerase X (174 aa).

An involved in ssDNA binding region spans residues 42-51 (REEKMLNDVD). Residues Asp49 and Asp51 each contribute to the Mg(2+) site. A disulfide bond links Cys81 and Cys86. Asp100 is a Mg(2+) binding site.

It belongs to the DNA polymerase type-X family. Requires Mg(2+) as cofactor.

It localises to the virion. The enzyme catalyses DNA(n) + a 2'-deoxyribonucleoside 5'-triphosphate = DNA(n+1) + diphosphate. Functionally, error-prone polymerase lacking a proofreading 3'-5' exonuclease which catalyzes the gap-filling reaction during the DNA repair process. Specifically binds intermediates in the single-nucleotide base-excision repair process. Also catalyzes DNA polymerization with low nucleotide-insertion fidelity. Probably acts as a strategic DNA mutase, which gives rise to a rapid emergence of variants. Generates mismatched G-G pairs, in that case, the polymerase first binds the deoxynucleotide followed by mismatch formation. Together with the viral DNA ligase, fills the single nucleotide gaps generated by the AP endonuclease. Binds DNA with high affinity via the helix alphaE. This chain is Repair DNA polymerase X, found in Ornithodoros (relapsing fever ticks).